The following is a 1603-amino-acid chain: Pentafunctional AROM polypeptide (1603 aa).

The interval 1-384 (MGVPTKISIL…YEPRASTVSN (384 aa)) is 3-dehydroquinate synthase. NAD(+) is bound by residues 44–46 (DTN), 81–84 (ESSK), 114–116 (GGV), and D119. Residue R130 participates in 7-phospho-2-dehydro-3-deoxy-D-arabino-heptonate binding. 139–140 (TT) provides a ligand contact to NAD(+). 2 residues coordinate 7-phospho-2-dehydro-3-deoxy-D-arabino-heptonate: D146 and K152. K161 serves as a coordination point for NAD(+). Residue N162 coordinates 7-phospho-2-dehydro-3-deoxy-D-arabino-heptonate. NAD(+) contacts are provided by residues 179–182 (FLNT) and N190. Residue E194 coordinates Zn(2+). Residues 194 to 197 (EVIK) and K250 each bind 7-phospho-2-dehydro-3-deoxy-D-arabino-heptonate. E260 functions as the Proton acceptor; for 3-dehydroquinate synthase activity in the catalytic mechanism. 7-phospho-2-dehydro-3-deoxy-D-arabino-heptonate-binding positions include 264-268 (RNLLN) and H271. H271 lines the Zn(2+) pocket. H275 (proton acceptor; for 3-dehydroquinate synthase activity) is an active-site residue. 7-phospho-2-dehydro-3-deoxy-D-arabino-heptonate is bound by residues H287 and K356. H287 serves as a coordination point for Zn(2+). Positions 397–842 (VYPGFPKSLN…WNTLAQTFKV (446 aa)) are EPSP synthase. C824 acts as the For EPSP synthase activity in catalysis. The interval 872 to 1064 (AASIFIIGMR…RRKENTFFVS (193 aa)) is shikimate kinase. 879–886 (GMRGAGKT) contributes to the ATP binding site. The tract at residues 1065–1285 (LTFPDLTPAS…AAPGQLSARE (221 aa)) is 3-dehydroquinase. H1188 functions as the Proton acceptor; for 3-dehydroquinate dehydratase activity in the catalytic mechanism. K1216 serves as the catalytic Schiff-base intermediate with substrate; for 3-dehydroquinate dehydratase activity. The segment at 1298 to 1603 (AKKFAVIGKP…GVSSSDDTIS (306 aa)) is shikimate dehydrogenase.

In the N-terminal section; belongs to the sugar phosphate cyclases superfamily. Dehydroquinate synthase family. This sequence in the 2nd section; belongs to the EPSP synthase family. It in the 3rd section; belongs to the shikimate kinase family. The protein in the 4th section; belongs to the type-I 3-dehydroquinase family. In the C-terminal section; belongs to the shikimate dehydrogenase family. In terms of assembly, homodimer. Zn(2+) is required as a cofactor.

It localises to the cytoplasm. It catalyses the reaction 7-phospho-2-dehydro-3-deoxy-D-arabino-heptonate = 3-dehydroquinate + phosphate. The enzyme catalyses 3-dehydroquinate = 3-dehydroshikimate + H2O. It carries out the reaction shikimate + NADP(+) = 3-dehydroshikimate + NADPH + H(+). The catalysed reaction is shikimate + ATP = 3-phosphoshikimate + ADP + H(+). It catalyses the reaction 3-phosphoshikimate + phosphoenolpyruvate = 5-O-(1-carboxyvinyl)-3-phosphoshikimate + phosphate. The protein operates within metabolic intermediate biosynthesis; chorismate biosynthesis; chorismate from D-erythrose 4-phosphate and phosphoenolpyruvate: step 2/7. It functions in the pathway metabolic intermediate biosynthesis; chorismate biosynthesis; chorismate from D-erythrose 4-phosphate and phosphoenolpyruvate: step 3/7. Its pathway is metabolic intermediate biosynthesis; chorismate biosynthesis; chorismate from D-erythrose 4-phosphate and phosphoenolpyruvate: step 4/7. It participates in metabolic intermediate biosynthesis; chorismate biosynthesis; chorismate from D-erythrose 4-phosphate and phosphoenolpyruvate: step 5/7. The protein operates within metabolic intermediate biosynthesis; chorismate biosynthesis; chorismate from D-erythrose 4-phosphate and phosphoenolpyruvate: step 6/7. Functionally, the AROM polypeptide catalyzes 5 consecutive enzymatic reactions in prechorismate polyaromatic amino acid biosynthesis. In Paracoccidioides brasiliensis (strain Pb03), this protein is Pentafunctional AROM polypeptide.